The primary structure comprises 105 residues: BLOC-1-related complex subunit 7 (105 aa).

This sequence belongs to the BORCS7 family. In terms of assembly, component of the BLOC-one-related complex (BORC) which is composed of BLOC1S1, BLOC1S2, BORCS5, BORCS6, BORCS7, BORCS8, KXD1 and SNAPIN.

The protein resides in the lysosome membrane. In terms of biological role, as part of the BORC complex may play a role in lysosomes movement and localization at the cell periphery. Associated with the cytosolic face of lysosomes, the BORC complex may recruit ARL8B and couple lysosomes to microtubule plus-end-directed kinesin motor. In Bos taurus (Bovine), this protein is BLOC-1-related complex subunit 7.